A 440-amino-acid chain; its full sequence is Chromosomal replication initiator protein DnaA (440 aa).

Residues 1-74 (MNPSQILENL…VQSGNKAIIN (74 aa)) are domain I, interacts with DnaA modulators. A domain II region spans residues 74–99 (NIQAQSAKQSNKSTKIDIAHIKAQST). Residues 100-316 (ILNPSFTFDS…GIIISLNAYA (217 aa)) are domain III, AAA+ region. Gly146, Gly148, Lys149, and Thr150 together coordinate ATP. Positions 317–440 (TILGQEITLE…KNKILVKSQS (124 aa)) are domain IV, binds dsDNA.

The protein belongs to the DnaA family. As to quaternary structure, oligomerizes as a right-handed, spiral filament on DNA at oriC.

Its subcellular location is the cytoplasm. Functionally, plays an essential role in the initiation and regulation of chromosomal replication. ATP-DnaA binds to the origin of replication (oriC) to initiate formation of the DNA replication initiation complex once per cell cycle. Binds the DnaA box (a 9 base pair repeat at the origin) and separates the double-stranded (ds)DNA. Forms a right-handed helical filament on oriC DNA; dsDNA binds to the exterior of the filament while single-stranded (ss)DNA is stabiized in the filament's interior. The ATP-DnaA-oriC complex binds and stabilizes one strand of the AT-rich DNA unwinding element (DUE), permitting loading of DNA polymerase. After initiation quickly degrades to an ADP-DnaA complex that is not apt for DNA replication. Binds acidic phospholipids. This chain is Chromosomal replication initiator protein DnaA, found in Campylobacter jejuni (strain RM1221).